We begin with the raw amino-acid sequence, 316 residues long: Olfactory receptor 10H3 (316 aa).

The Extracellular segment spans residues 1-25 (MPGQNYRTISEFILSGFSAFPQQLL). The helical transmembrane segment at 26 to 46 (PVLFLLYLLMFLFTLLGNLLI) threads the bilayer. Residues 47–54 (MATVWIER) lie on the Cytoplasmic side of the membrane. Residues 55-75 (RLHTPMYLFLCALSISEILFT) traverse the membrane as a helical segment. The Extracellular segment spans residues 76–99 (VAITPRMLADLLFTHRSITFVACA). The cysteines at positions 98 and 190 are disulfide-linked. A helical membrane pass occupies residues 100 to 120 (IQMFFSFMFGFTHSFLLMVMG). Residues 121 to 139 (YDHYVTICHPLHYNMLMSP) are Cytoplasmic-facing. Residues 140-160 (RGCAHLVAWTWAGGSVMGMMV) form a helical membrane-spanning segment. Residues 161–197 (TMMVFHLTFCGSNVIHHFLCHVLSLLKLACGSKTSSV) lie on the Extracellular side of the membrane. The helical transmembrane segment at 198-218 (IMGVMLVCVTALIGCLFLIIL) threads the bilayer. Topologically, residues 219–238 (SFVFIVAAILRIPSAEGRHK) are cytoplasmic. A helical membrane pass occupies residues 239 to 259 (TFSTCVSHLTVVVMHYSFASL). The Extracellular portion of the chain corresponds to 260–272 (IYLKPKGLHSMYS). A helical transmembrane segment spans residues 273 to 293 (DALMATTYTVFTPFLSPIIFS). Residues 294 to 316 (LRNKELKNAINKNFCRRFCPLSS) are Cytoplasmic-facing.

Belongs to the G-protein coupled receptor 1 family.

The protein resides in the cell membrane. Functionally, odorant receptor. The polypeptide is Olfactory receptor 10H3 (OR10H3) (Homo sapiens (Human)).